A 251-amino-acid chain; its full sequence is Ubiquinone/menaquinone biosynthesis C-methyltransferase UbiE (251 aa).

Residues threonine 74, aspartate 95, and 123–124 (NA) each bind S-adenosyl-L-methionine.

This sequence belongs to the class I-like SAM-binding methyltransferase superfamily. MenG/UbiE family.

The enzyme catalyses a 2-demethylmenaquinol + S-adenosyl-L-methionine = a menaquinol + S-adenosyl-L-homocysteine + H(+). It catalyses the reaction a 2-methoxy-6-(all-trans-polyprenyl)benzene-1,4-diol + S-adenosyl-L-methionine = a 5-methoxy-2-methyl-3-(all-trans-polyprenyl)benzene-1,4-diol + S-adenosyl-L-homocysteine + H(+). It participates in quinol/quinone metabolism; menaquinone biosynthesis; menaquinol from 1,4-dihydroxy-2-naphthoate: step 2/2. It functions in the pathway cofactor biosynthesis; ubiquinone biosynthesis. Its function is as follows. Methyltransferase required for the conversion of demethylmenaquinol (DMKH2) to menaquinol (MKH2) and the conversion of 2-polyprenyl-6-methoxy-1,4-benzoquinol (DDMQH2) to 2-polyprenyl-3-methyl-6-methoxy-1,4-benzoquinol (DMQH2). The protein is Ubiquinone/menaquinone biosynthesis C-methyltransferase UbiE of Shewanella woodyi (strain ATCC 51908 / MS32).